The chain runs to 266 residues: Signal peptidase I (266 aa).

Over 1-20 (MQTDNTKSNTNKTAKQEWGS) the chain is Cytoplasmic. A helical transmembrane segment spans residues 21–41 (FAFVICIALLIRILIMEPFNV). Residues 42–266 (PTGSMKATIL…IFRNLYNTDA (225 aa)) lie on the Extracellular side of the membrane. Catalysis depends on residues Ser45 and Lys108.

This sequence belongs to the peptidase S26 family.

The protein localises to the cell membrane. It catalyses the reaction Cleavage of hydrophobic, N-terminal signal or leader sequences from secreted and periplasmic proteins.. This is Signal peptidase I (lepB) from Rickettsia conorii (strain ATCC VR-613 / Malish 7).